Here is a 302-residue protein sequence, read N- to C-terminus: Phytoene synthase (302 aa).

It belongs to the phytoene/squalene synthase family. ATP serves as cofactor. Requires Mn(2+) as cofactor. It depends on Mg(2+) as a cofactor.

The protein operates within carotenoid biosynthesis; phytoene biosynthesis. In terms of biological role, involved in the biosynthesis of carotenoids. Catalyzes the condensation of two molecules of geranylgeranyl diphosphate (GGPP) to give prephytoene diphosphate (PPPP) and the subsequent rearrangement of the cyclopropylcarbinyl intermediate to yield phytoene. This Mycobacterium bovis (strain ATCC BAA-935 / AF2122/97) protein is Phytoene synthase (crtB).